Here is a 131-residue protein sequence, read N- to C-terminus: Small ribosomal subunit protein uS11 (131 aa).

This sequence belongs to the universal ribosomal protein uS11 family. As to quaternary structure, part of the 30S ribosomal subunit. Interacts with proteins S7 and S18. Binds to IF-3.

Located on the platform of the 30S subunit, it bridges several disparate RNA helices of the 16S rRNA. Forms part of the Shine-Dalgarno cleft in the 70S ribosome. The protein is Small ribosomal subunit protein uS11 of Buchnera aphidicola subsp. Acyrthosiphon pisum (strain 5A).